Here is a 122-residue protein sequence, read N- to C-terminus: Small ribosomal subunit protein uS13 (122 aa).

The disordered stretch occupies residues 97–122 (PVRGQRTHTNARTRKGPAKAIAGKKK).

This sequence belongs to the universal ribosomal protein uS13 family. As to quaternary structure, part of the 30S ribosomal subunit. Forms a loose heterodimer with protein S19. Forms two bridges to the 50S subunit in the 70S ribosome.

Its function is as follows. Located at the top of the head of the 30S subunit, it contacts several helices of the 16S rRNA. In the 70S ribosome it contacts the 23S rRNA (bridge B1a) and protein L5 of the 50S subunit (bridge B1b), connecting the 2 subunits; these bridges are implicated in subunit movement. Contacts the tRNAs in the A and P-sites. The chain is Small ribosomal subunit protein uS13 from Bartonella henselae (strain ATCC 49882 / DSM 28221 / CCUG 30454 / Houston 1) (Rochalimaea henselae).